The chain runs to 413 residues: Multidrug resistance protein MdtA (413 aa).

Residues 1–20 form the signal peptide; it reads MKGSNTFRWAIAIGVVVAAA. 2 disordered regions span residues 31–57 and 391–413; these read SPTAAPGVAAQAQHTAAAGRRGMRDGP and EPQTTMADEKSPSRHEGQKGARA. Positions 32–49 are enriched in low complexity; the sequence is PTAAPGVAAQAQHTAAAG. A compositionally biased stretch (basic and acidic residues) spans 397-413; the sequence is ADEKSPSRHEGQKGARA.

This sequence belongs to the membrane fusion protein (MFP) (TC 8.A.1) family. In terms of assembly, part of a tripartite efflux system composed of MdtA, MdtB and MdtC.

Its subcellular location is the cell inner membrane. The protein is Multidrug resistance protein MdtA of Salmonella typhi.